We begin with the raw amino-acid sequence, 181 residues long: Prepronociceptin (181 aa).

Positions 1 to 19 (MKILFCDVLLLSLLSSVFS) are cleaved as a signal peptide. A propeptide spanning residues 20–95 (SCPEDCLTCQ…QSKASEMQHL (76 aa)) is cleaved from the precursor. The interval 103 to 125 (SVVQARDAEPEADAEPVADEADE) is disordered. Tandem repeats lie at residues 109–114 (DAEPEA) and 115–120 (DAEPVA). Residues 109 to 120 (DAEPEADAEPVA) form a 2 X 6 AA tandem repeats of D-A-E-P-X-A region. Positions 112–125 (PEADAEPVADEADE) are enriched in acidic residues. A propeptide spanning residues 174–181 (TLHQNGNV) is cleaved from the precursor.

This sequence belongs to the opioid neuropeptide precursor family. Specific enzymatic cleavages at paired basic residues probably yield other active peptides besides nociceptin. Post-translationally, the N-terminal domain contains 6 conserved cysteines thought to be involved in disulfide bonding and/or processing. In terms of tissue distribution, expressed predominantly in the spinal cord and brain, being more abundant in the hypothalamus and striatum. Also found in small amounts in ovary.

The protein localises to the secreted. Its function is as follows. Ligand of the opioid receptor-like receptor OPRL1. It may act as a transmitter in the brain by modulating nociceptive and locomotor behavior. May be involved in neuronal differentiation and development. In terms of biological role, blocks nociceptin action in pain transmission by inhibiting nociceptin-induced hyperalgesia and allodynia. Has potent analgesic activity. The chain is Prepronociceptin (Pnoc) from Rattus norvegicus (Rat).